We begin with the raw amino-acid sequence, 361 residues long: D-alanine--D-alanine ligase (361 aa).

An ATP-grasp domain is found at 134-344 (KLLLKSFDIP…FKDLVDNLID (211 aa)). An ATP-binding site is contributed by 167–222 (KEVLGYPVIVKPAVLGSSIGINVAYSENQIESFIKEALKYDLTIVIEKFIEAREIE). Residues Asp297, Glu311, and Asn313 each contribute to the Mg(2+) site.

Belongs to the D-alanine--D-alanine ligase family. The cofactor is Mg(2+). Requires Mn(2+) as cofactor.

It is found in the cytoplasm. The enzyme catalyses 2 D-alanine + ATP = D-alanyl-D-alanine + ADP + phosphate + H(+). The protein operates within cell wall biogenesis; peptidoglycan biosynthesis. Cell wall formation. The chain is D-alanine--D-alanine ligase from Borreliella burgdorferi (strain ZS7) (Borrelia burgdorferi).